The following is a 603-amino-acid chain: NADH-ubiquinone oxidoreductase chain 5 (603 aa).

Transmembrane regions (helical) follow at residues 4–24 (YATM…GALI), 38–58 (SIIA…MCLD), 87–107 (MTFI…SLWY), 122–142 (LIFL…QLFI), 144–160 (WEGV…WWYA), 171–191 (AILY…WFLL), 211–233 (TPLL…HPWL), 241–261 (TPVS…FLLI), 272–292 (LIQT…AVCA), 301–320 (IVAF…IGIN), 325–347 (AFLH…GSII), 370–390 (STSL…TGFY), 405–422 (NAWA…TSAY), 457–477 (LTIG…PMST), 482–502 (IPLY…LTAL), and 582–602 (GMIK…LLLI).

The protein belongs to the complex I subunit 5 family. In terms of assembly, core subunit of respiratory chain NADH dehydrogenase (Complex I) which is composed of 45 different subunits.

Its subcellular location is the mitochondrion inner membrane. The enzyme catalyses a ubiquinone + NADH + 5 H(+)(in) = a ubiquinol + NAD(+) + 4 H(+)(out). Functionally, core subunit of the mitochondrial membrane respiratory chain NADH dehydrogenase (Complex I) which catalyzes electron transfer from NADH through the respiratory chain, using ubiquinone as an electron acceptor. Essential for the catalytic activity and assembly of complex I. The sequence is that of NADH-ubiquinone oxidoreductase chain 5 (MT-ND5) from Pan troglodytes (Chimpanzee).